The primary structure comprises 1069 residues: MGSVRWKTHQQWLIIFWILSFSGVFGFSELWFSIEPQDVSVSAGQHVVLDCQAGGESPVSVRWRENGVQIQESECVRLLSNGSLCVSNLTQQRDEGYYQCVANNQYGAIISHRARLTITGVLVFSAHPVPLELRLGSVARFSCAVNRSPADISWEINQRSLPQDSDRITVLPNGVLQIRNVTMRDAGKYRCVAANAASRVTSREAELVLIPVGGPRRLLKPLIIAGPQNISVALHQPVVLECLAEGNPRPLVSWSRADSKPIDVSAASVLGNGNLMISAVKAHHSGTYVCRATTPGTRNYTTAAGNVTVLPPSLVEKPESQTRPRAGTARFSCQAEGTPTPQITWFKNGEVIRTNGRTKMYNNKLVITQIIPEDDAFYQCLAENSQGSVVSTSRLIVVQSENRPSAPRNIHAETISSSAILLAWERPQYNADKVIAYSIHYMKSEGLNNEEYQAVIGNDTTSHIVDDLEPARNYTFYIVAYMAMGASRMSEQVTRHTLEDVPLRTPELSLTSRSPTDILVSWQPLPPKLSRGRVSAYRLSYRTATDEQVNSVELPVSGENGTQYLLQDLQPDTIYLIRMSVSTRVGWSQPSAWSSHRTPKTSSATVPPAPNLELEPLNCTSVSVRWFPAASDVLIQGFKLSFHPDGQSEDSITQLPPQDHQHTITALNPRVKYHVKVLAFSANGDGYQAHQTVNTPGCPSTPNRRLAALPPPDHTHAKANSSSAVHLSWGRPAFSSGKPVTFSVRYGPASPSEASSVRYIQTSEQTVMVTGLQPNTRYEFAVRLHMDQMSSPWSATVYQRTLLEAPMSPPESVKVTLIEADTALVCWKQPNQPNLSVTHYTVLYASQSSWLAGEWQVLQREGTNTMALLEKLESGNVYLVKISASNLAGDGPFSNTVELAVKGKPHHGKNPRHADSHAEKTAFIDGLYHIDEKSMSGIIVGVCIALSCIILCIFILLSKTQTQKSASSKMIGSMRNEVMHNEASSANQQPAENAEVLLPMMRNHFIDAKGGSNLLINHAGPINCGSQTKRKRWSIFNHSQRSNESKNETEDPACLYEVGKTVLCYEDEA.

Residues 1 to 26 form the signal peptide; it reads MGSVRWKTHQQWLIIFWILSFSGVFG. Residues 27–936 lie on the Extracellular side of the membrane; it reads FSELWFSIEP…LYHIDEKSMS (910 aa). Ig-like domains follow at residues 30–117, 122–208, 221–308, and 312–396; these read LWFS…ARLT, LVFS…AELV, PLII…GNVT, and PSLV…SRLI. 2 disulfide bridges follow: cysteine 51/cysteine 100 and cysteine 143/cysteine 191. N-linked (GlcNAc...) asparagine glycans are attached at residues asparagine 81, asparagine 88, asparagine 180, and asparagine 229. An intrachain disulfide couples cysteine 242 to cysteine 290. N-linked (GlcNAc...) asparagine glycans are attached at residues asparagine 299 and asparagine 306. Residues 317-336 form a disordered region; it reads KPESQTRPRAGTARFSCQAE. Cysteine 333 and cysteine 380 are oxidised to a cystine. Fibronectin type-III domains are found at residues 406-500, 502-601, 608-701, 711-804, and 809-904; these read APRN…TLED, PLRT…TPKT, PAPN…CPST, PPDH…TLLE, and PPES…VKGK. Residues asparagine 458, asparagine 473, and asparagine 560 are each glycosylated (N-linked (GlcNAc...) asparagine). Residues 590 to 605 show a composition bias toward polar residues; that stretch reads PSAWSSHRTPKTSSAT. Residues 590 to 609 form a disordered region; it reads PSAWSSHRTPKTSSATVPPA. Asparagine 618, asparagine 720, and asparagine 834 each carry an N-linked (GlcNAc...) asparagine glycan. Residues 937-957 traverse the membrane as a helical segment; sequence GIIVGVCIALSCIILCIFILL. At 958 to 1069 the chain is on the cytoplasmic side; sequence SKTQTQKSAS…KTVLCYEDEA (112 aa).

This sequence belongs to the immunoglobulin superfamily. DCC family. Initially expressed in the ventral forebrain and ventral spinal cord. Later, also expressed in the midbrain and in parts of the diencephalon and hindbrain.

The protein localises to the membrane. Its function is as follows. May play a role in anteroposterior axis elongation. In Danio rerio (Zebrafish), this protein is Protogenin B.